The following is a 904-amino-acid chain: MINLEDYWEDETPGPDREPTNELRNEVEETITLMELLKVSELKDICRSVSFPVSGRKAVLQDLIRNFLQNALVVGKSDPYRVQAVKFLIERIRKNEPLPVYKDLWNALRKGTPLSAITVRSMEGPPTVQQQSPSVIRQSPTQRRKTSTTSSTSRAPPPTNPDASSSSSSFAVPTIHFKESPFYKIQRLIPELVMNVEVTGGRGMCSAKFKLSKADYNLLSNPNSKHRLYLFSGMINPLGSRGNEPIQFPFPNELRCNNVQIKDNIRGFKSKPGTAKPADLTPHLKPYTQQNNVELIYAFTTKEYKLFGYIVEMITPEQLLEKVLQHPKIIKQATLLYLKKTLREDEEMGLTTTSTIMSLQCPISYTRMKYPSKSINCKHLQCFDALWFLHSQLQIPTWQCPVCQIDIALENLAISEFVDDILQNCQKNVEQVELTSDGKWTAILEDDDDSDSDSNDGSRSPEKGTSVSDHHCSSSHPSEPIIINLDSDDDEPNGNNPHVTNNHDDSNRHSNDNNNNSIKNNDSHNKNNNNNNNNNNNNNDNNNSIENNDSNSNNKHDHGSRSNTPSHNHTKNLMNDNDDDDDDRLMAEITSNHLKSTNTDILTEKGSSAPSRTLDPKSYNIVASETTTPVTNRVIPEYLGNSSSYIGKQLPNILGKTPLNVTAVDNSSHLISPDVSVSSPTPRNTASNASSSALSTPPLIRMSSLDPRGSTVPDKTIRPPINSNSYTASISDSFVQPQESSVFPPREQNMDMSFPSTVNSRFNDPRLNTTRFPDSTLRGATILSNNGLDQRNNSLPTTEAITRNDVGRQNSTPVLPTLPQNVPIRTNSNKSGLPLINNENSVPNPPNTATIPLQKSRLIVNPFIPRRPYSNVLPQKRQLSNTSSTSPIMGTWKTQDYGKKYNSG.

Acidic residues predominate over residues 1-13; the sequence is MINLEDYWEDETP. Residues 1–21 are disordered; the sequence is MINLEDYWEDETPGPDREPTN. The SAP domain occupies 34 to 68; it reads MELLKVSELKDICRSVSFPVSGRKAVLQDLIRNFL. Positions 122-170 are disordered; that stretch reads MEGPPTVQQQSPSVIRQSPTQRRKTSTTSSTSRAPPPTNPDASSSSSSF. Over residues 127-136 the composition is skewed to polar residues; that stretch reads TVQQQSPSVI. A Phosphoserine modification is found at serine 132. Over residues 137–154 the composition is skewed to low complexity; sequence RQSPTQRRKTSTTSSTSR. A PINIT domain is found at 162–314; the sequence is DASSSSSSFA…KLFGYIVEMI (153 aa). The segment at 344-431 adopts an SP-RING-type zinc-finger fold; it reads EDEEMGLTTT…LQNCQKNVEQ (88 aa). The Zn(2+) site is built by cysteine 377, histidine 379, cysteine 400, and cysteine 403. Disordered stretches follow at residues 443 to 584, 596 to 616, and 672 to 733; these read ILED…DDDR, STNTDILTEKGSSAPSRTLDP, and SPDV…ISDS. The segment covering 444 to 454 has biased composition (acidic residues); sequence LEDDDDSDSDS. Residues 501 to 511 show a composition bias toward basic and acidic residues; sequence NNHDDSNRHSN. Positions 512–553 are enriched in low complexity; the sequence is DNNNNSIKNNDSHNKNNNNNNNNNNNNNDNNNSIENNDSNSN. Composition is skewed to polar residues over residues 561-574, 596-611, and 672-683; these read RSNTPSHNHTKNLM, STNTDILTEKGSSAPS, and SPDVSVSSPTPR. The segment covering 684–699 has biased composition (low complexity); the sequence is NTASNASSSALSTPPL. Polar residues predominate over residues 721–733; it reads INSNSYTASISDS. Phosphoserine is present on serine 794. The required for localization at the bud neck stretch occupies residues 794 to 904; sequence SLPTTEAITR…QDYGKKYNSG (111 aa). The segment covering 877-894 has biased composition (polar residues); the sequence is RQLSNTSSTSPIMGTWKT. Positions 877-904 are disordered; it reads RQLSNTSSTSPIMGTWKTQDYGKKYNSG.

The protein belongs to the PIAS family. Interacts with UBC9 and CDC3. Post-translationally, phosphorylated in early M-phase. In terms of processing, autosumoylated upon ethanol stress.

Its subcellular location is the cytoplasm. It localises to the nucleus. The protein localises to the bud neck. The protein operates within protein modification; protein sumoylation. Functionally, acts as an E3 ligase mediating SUMO/Smt3 attachment to septins and PCNA. May be involved in chromosome maintenance. The polypeptide is E3 SUMO-protein ligase SIZ1 (SIZ1) (Saccharomyces cerevisiae (strain ATCC 204508 / S288c) (Baker's yeast)).